A 530-amino-acid chain; its full sequence is MADDIDIEAMLEAPYKKDENKLNSANGHEERSKKRKKSKSRSRSHERKRSKSKERKRSRDRERKKSKSRERKRSRSKERRRSRSRSRDRRFRGRYRSPYSGPKFNSAIRGKIGLPHSIKLSRRRSRSKSPFRKDKSPVREPIDNLTPEERDARTVFCMQLAARIRPRDLEEFFSTVGKVRDVRMISDRNSRRSKGIAYVEFVDVSSVPLAIGLTGQRVLGVPIIVQASQAEKNRAAAMANNLQKGSAGPMRLYVGSLHFNITEDMLRGIFEPFGRIESIQLMMDSETGRSKGYGFITFSDSECAKKALEQLNGFELAGRPMKVGHVTERTDASSASSFLDSDELERTGIDLGTTGRLQLMARLAEGTGLQIPPAAQQALQMSGSLAFGAVAEFSFVIDLQTRLSQQTEASALAAAASVQPLATQCFQLSNMFNPQTEEEVGWDTEIKDDVIEECNKHGGVIHIYVDKNSAQGNVYVKCPSIAAAIAAVNALHGRWFAGKMITAAYVPLPTYHNLFPDSMTATQLLVPSRR.

The tract at residues 1–146 (MADDIDIEAM…PVREPIDNLT (146 aa)) is disordered. The residue at position 2 (Ala-2) is an N-acetylalanine. Basic and acidic residues predominate over residues 14–32 (PYKKDENKLNSANGHEERS). Composition is skewed to basic residues over residues 33 to 56 (KKRKKSKSRSRSHERKRSKSKERK) and 64 to 95 (KKSKSRERKRSRSKERRRSRSRSRDRRFRGRY). Tyr-95 carries the phosphotyrosine modification. A phosphoserine mark is found at Ser-97 and Ser-100. Lys-111 is covalently cross-linked (Glycyl lysine isopeptide (Lys-Gly) (interchain with G-Cter in SUMO2)). Ser-117 carries the post-translational modification Phosphoserine. A Glycyl lysine isopeptide (Lys-Gly) (interchain with G-Cter in SUMO2) cross-link involves residue Lys-119. Residues 119–130 (KLSRRRSRSKSP) are compositionally biased toward basic residues. Phosphoserine occurs at positions 121 and 136. Residues 131–146 (FRKDKSPVREPIDNLT) show a composition bias toward basic and acidic residues. The residue at position 146 (Thr-146) is a Phosphothreonine. In terms of domain architecture, RRM 1 spans 153 to 230 (RTVFCMQLAA…VPIIVQASQA (78 aa)). Lys-244 participates in a covalent cross-link: Glycyl lysine isopeptide (Lys-Gly) (interchain with G-Cter in SUMO2). Positions 250–328 (MRLYVGSLHF…RPMKVGHVTE (79 aa)) constitute an RRM 2 domain. Residues 291-355 (KGYGFITFSD…RTGIDLGTTG (65 aa)) are activating domain. The segment at 291-406 (KGYGFITFSD…IDLQTRLSQQ (116 aa)) is interaction with JUN. Residues Ser-334, Ser-337, and Ser-341 each carry the phosphoserine modification. The interval 355–406 (GRLQLMARLAEGTGLQIPPAAQQALQMSGSLAFGAVAEFSFVIDLQTRLSQQ) is interaction with ESR1 and ESR2. Residues 406 to 530 (QTEASALAAA…ATQLLVPSRR (125 aa)) form an interaction with NCOA6 region. The RRM 3 domain occupies 445–508 (EIKDDVIEEC…KMITAAYVPL (64 aa)).

It belongs to the splicing factor SR family. As to quaternary structure, interacts with NCOA6 and JUN. Interacts with ESR1 and ESR2, in the presence of estradiol (E2). Interacts with RSRC1 (via Arg/Ser-rich domain). Interacts with SF3B1. Interacts with ZNF106 (via N-terminus).

Its subcellular location is the nucleus. RNA-binding protein that acts as a pre-mRNA splicing factor. Acts by promoting exon inclusion via regulation of exon cassette splicing. Also acts as a transcriptional coactivator for steroid nuclear receptors ESR1/ER-alpha and ESR2/ER-beta, and JUN/AP-1, independently of the pre-mRNA splicing factor activity. This chain is RNA-binding protein 39 (Rbm39), found in Mus musculus (Mouse).